A 464-amino-acid polypeptide reads, in one-letter code: Fumarate hydratase class II 1 (464 aa).

Substrate contacts are provided by residues 96–98 (SGT), 127–130 (HPND), 137–139 (SSN), and Thr185. The active-site Proton donor/acceptor is the His186. Ser316 is a catalytic residue. Substrate contacts are provided by residues Ser317 and 322–324 (KVN).

Belongs to the class-II fumarase/aspartase family. Fumarase subfamily. Homotetramer.

Its subcellular location is the cytoplasm. It catalyses the reaction (S)-malate = fumarate + H2O. It functions in the pathway carbohydrate metabolism; tricarboxylic acid cycle; (S)-malate from fumarate: step 1/1. In terms of biological role, involved in the TCA cycle. Catalyzes the stereospecific interconversion of fumarate to L-malate. This chain is Fumarate hydratase class II 1, found in Pseudomonas aeruginosa (strain ATCC 15692 / DSM 22644 / CIP 104116 / JCM 14847 / LMG 12228 / 1C / PRS 101 / PAO1).